The chain runs to 82 residues: MSSINYPFVTEKAMMLLDENKLQFIVDTRSNKKQIVEDVEKLYGFKVKAVRTMTTMKGTKKAVLAFEEPEAAHEIATRIGLM.

This sequence belongs to the universal ribosomal protein uL23 family. In terms of assembly, part of the 50S ribosomal subunit. Contacts protein L29.

Functionally, binds to 23S rRNA. One of the proteins that surrounds the polypeptide exit tunnel on the outside of the ribosome. This chain is Large ribosomal subunit protein uL23, found in Methanosarcina mazei (strain ATCC BAA-159 / DSM 3647 / Goe1 / Go1 / JCM 11833 / OCM 88) (Methanosarcina frisia).